The chain runs to 178 residues: Endothelin-2 (178 aa).

Positions 1–24 (MVSVPTTWCSVALALLVALHEGKG) are cleaved as a signal peptide. The propeptide occupies 25–46 (QAAATLEQPASSSHAQGTHLRL). Intrachain disulfides connect Cys49–Cys63 and Cys51–Cys59. A propeptide spanning residues 70–178 (VNTPEQTAPY…RSTHSRWRKR (109 aa)) is cleaved from the precursor. The segment at 96 to 111 (CQCSSARDPACATFCL) is endothelin-like. Residues 159 to 178 (KRQQEAMREPRSTHSRWRKR) are disordered. Basic and acidic residues predominate over residues 160-170 (RQQEAMREPRS).

The protein belongs to the endothelin/sarafotoxin family. In terms of tissue distribution, expressed in lung, but not in placental stem villi vessels or cultured placental villi smooth muscle cells.

It localises to the secreted. Functionally, endothelins are endothelium-derived vasoconstrictor peptides. This chain is Endothelin-2 (EDN2), found in Homo sapiens (Human).